A 147-amino-acid chain; its full sequence is Thyrotropin subunit beta (147 aa).

The first 20 residues, 1-20 (MRVVLLASAVLCLLAGQVLS), serve as a signal peptide directing secretion. 6 cysteine pairs are disulfide-bonded: Cys22-Cys72, Cys36-Cys87, Cys39-Cys126, Cys47-Cys103, Cys51-Cys105, and Cys108-Cys115. A glycan (N-linked (GlcNAc...) asparagine) is linked at Asn43.

The protein belongs to the glycoprotein hormones subunit beta family. In terms of assembly, heterodimer of a common alpha chain and a unique beta chain which confers biological specificity to thyrotropin, lutropin, follitropin and gonadotropin.

The protein resides in the secreted. Functionally, indispensable for the control of thyroid structure and metabolism. May play some role in the biological processes of the immature fishes. The polypeptide is Thyrotropin subunit beta (tshb) (Anguilla anguilla (European freshwater eel)).